Consider the following 302-residue polypeptide: Protein FdhE homolog (302 aa).

The protein belongs to the FdhE family.

It is found in the cytoplasm. In terms of biological role, necessary for formate dehydrogenase activity. This Shewanella oneidensis (strain ATCC 700550 / JCM 31522 / CIP 106686 / LMG 19005 / NCIMB 14063 / MR-1) protein is Protein FdhE homolog.